A 24-amino-acid polypeptide reads, in one-letter code: Potassium channel toxin alpha-KTx 6 OcyKTx5 (24 aa).

C3 and C24 are joined by a disulfide.

The protein belongs to the short scorpion toxin superfamily. Potassium channel inhibitor family. Alpha-KTx 06 subfamily. Expressed by the venom gland.

It localises to the secreted. Its function is as follows. Blocks voltage-gated potassium channels. The protein is Potassium channel toxin alpha-KTx 6 OcyKTx5 of Opisthacanthus cayaporum (South American scorpion).